The primary structure comprises 296 residues: Large ribosomal subunit protein uL18A (296 aa).

Positions 251-296 (PVHEKKPKKEVKKKRWNRAKLSLEQKKDRVAQKKASFLRAQEKADS) are disordered. The segment covering 255–268 (KKPKKEVKKKRWNR) has biased composition (basic residues). Positions 271–281 (LSLEQKKDRVA) are enriched in basic and acidic residues.

The protein belongs to the universal ribosomal protein uL18 family. Component of the large ribosomal subunit (LSU). Part of a LSU subcomplex, the 5S RNP which is composed of the 5S RNA, RPL5 and RPL11.

It localises to the cytoplasm. It is found in the nucleus. Its subcellular location is the nucleolus. In terms of biological role, component of the ribosome, a large ribonucleoprotein complex responsible for the synthesis of proteins in the cell. The small ribosomal subunit (SSU) binds messenger RNAs (mRNAs) and translates the encoded message by selecting cognate aminoacyl-transfer RNA (tRNA) molecules. The large subunit (LSU) contains the ribosomal catalytic site termed the peptidyl transferase center (PTC), which catalyzes the formation of peptide bonds, thereby polymerizing the amino acids delivered by tRNAs into a polypeptide chain. The nascent polypeptides leave the ribosome through a tunnel in the LSU and interact with protein factors that function in enzymatic processing, targeting, and the membrane insertion of nascent chains at the exit of the ribosomal tunnel. As part of the 5S RNP/5S ribonucleoprotein particle it is an essential component of the LSU, required for its formation and the maturation of rRNAs. It also couples ribosome biogenesis to p53/TP53 activation. As part of the 5S RNP it accumulates in the nucleoplasm and inhibits MDM2, when ribosome biogenesis is perturbed, mediating the stabilization and the activation of TP53. In Xenopus laevis (African clawed frog), this protein is Large ribosomal subunit protein uL18A (rpl5-a).